The primary structure comprises 421 residues: MLDLRFVRTNPDVVRQALINKGVSVDLDRILALDVERRQILAEVEQLKARRNQVSKQVGILKQQGQDVSAIIAEMGAIGDRIKELDDRERQVSDELQDLLYQLPNLPAPDVPVGPDETGNVEVKRWGEPRQFAFPVKPHWDLGVAMDGLDFERAAKVTGSRFSFIKGGLARLHRALVSFFIDYLTERGYREVLPPVIINTASYYGSGQFPKFKEDVFSLAGTDYHLASTAEVPLVNMHRDEILDEAVLPLRYVGYSGCFRSEAGAAGRDTRGLIRQHYFEKVEMVQFTRPEESEQALMEIVANAEGMLEQLNLPYRRMLMCTGDMGFGQYKKYDIEVWMPSYERYVEISSCSNMSDFQARRANIRYRPAGGKPEFVHTLNGSGLAVGRTLAAVMENYQNEDGSITVPEVLRPYTRCERIER.

Residue 229–231 participates in L-serine binding; that stretch reads TAE. ATP is bound at residue 260-262; sequence RSE. L-serine is bound at residue Glu-283. 347–350 provides a ligand contact to ATP; it reads EISS. Ser-382 serves as a coordination point for L-serine.

It belongs to the class-II aminoacyl-tRNA synthetase family. Type-1 seryl-tRNA synthetase subfamily. As to quaternary structure, homodimer. The tRNA molecule binds across the dimer.

Its subcellular location is the cytoplasm. It catalyses the reaction tRNA(Ser) + L-serine + ATP = L-seryl-tRNA(Ser) + AMP + diphosphate + H(+). The enzyme catalyses tRNA(Sec) + L-serine + ATP = L-seryl-tRNA(Sec) + AMP + diphosphate + H(+). The protein operates within aminoacyl-tRNA biosynthesis; selenocysteinyl-tRNA(Sec) biosynthesis; L-seryl-tRNA(Sec) from L-serine and tRNA(Sec): step 1/1. In terms of biological role, catalyzes the attachment of serine to tRNA(Ser). Is also able to aminoacylate tRNA(Sec) with serine, to form the misacylated tRNA L-seryl-tRNA(Sec), which will be further converted into selenocysteinyl-tRNA(Sec). The polypeptide is Serine--tRNA ligase (Symbiobacterium thermophilum (strain DSM 24528 / JCM 14929 / IAM 14863 / T)).